The chain runs to 115 residues: MEILDKQAFFETREKLYTLSRSLNIIKQRIQIAENDRKKCLITINELESLSSETKTYKAVGKMFVISPMTSLKTELKQQVQKDEEDVKGLINQSKYIDAQITDTERSLNELVRKK.

The protein belongs to the prefoldin subunit beta family. As to quaternary structure, heterohexamer of two PFD-alpha type and four PFD-beta type subunits.

Functionally, binds specifically to cytosolic chaperonin (c-CPN) and transfers target proteins to it. Binds to nascent polypeptide chain and promotes folding in an environment in which there are many competing pathways for nonnative proteins. The polypeptide is Probable prefoldin subunit 1 (pfdn1) (Dictyostelium discoideum (Social amoeba)).